A 240-amino-acid polypeptide reads, in one-letter code: Glutamine amidotransferase-like protein chry6 (240 aa).

A Glutamine amidotransferase type-1 domain is found at 13-205 (NFILDDTGGR…FVASDNPVLV (193 aa)). Catalysis depends on cysteine 102, which acts as the Nucleophile. Residues histidine 185 and glutamate 187 contribute to the active site.

This sequence belongs to the peptidase C26 family.

It functions in the pathway pigment biosynthesis. In terms of biological role, glutamine amidotransferase-like protein; part of the gene cluster that mediates the biosynthesis of the yellow pigment chrysogine. Pyruvic acid and anthranilic acid are likely substrates for the nonribosomal peptide synthetase chry1/NRPS14, with pyruvic acid adenylated by the first A domain and anthranilic acid by the second. If pyruvic acid and anthranilic acid are merged and released from chry1/NRPS14 by hydrolysis, a subsequent amidation would lead to 2-pyruvoylaminobenzamide. This process is probably catalyzed by the amidotransferase chry2 using glutamine as amino donor. The dehydrogenase chry5 that has a terminal berberine bridge domain for C-N cyclization could catalyze the cyclization of 2-pyruvoylaminobenzamide to yield acetyl-4(3H)-quinazolidinone. A final reduction of acetyl-4(3H)-quinazolidinone catalyzed by the oxidoreductase chry4 would result in chrysogine. The chain is Glutamine amidotransferase-like protein chry6 from Gibberella zeae (strain ATCC MYA-4620 / CBS 123657 / FGSC 9075 / NRRL 31084 / PH-1) (Wheat head blight fungus).